We begin with the raw amino-acid sequence, 420 residues long: MALPNPHGPEKKLMPLFLEGEAREAEIARAASLPKVYMTSMETSDILMLGMGAFTPLKGFMNKAEWQGCVFDLKLPDGTMWPMPVTLSISAAELEASGIKEGSDVALIDRESGELYATMNIEEIYQIDKMAQAKEVFKTDDAEGHPGVAKTFAQGEYNLGGPIKALNEGKYHEIYPKYYLYPAQTRALFESKGWSRVVAFQTRNPMHRSHEYLVKFALESGFVDGAMIHAIVGALKAGDIPGETRVKCYEALVDNYFPRENIALAVYPMEMRYGGPREALLHAVFRQNFGCRYLIVGRDHAGVGSYYGPFDAQTIFDELWPGALELGPMKINWTFYCYKCESMASLMTCPHGKEDRVIVSGTQFRRAMQEGAELPKEFGRPEVLAILEEYYRTAEKVEIKKHAYEDLTPEMLAKIKEGKK.

This sequence belongs to the sulfate adenylyltransferase family.

It carries out the reaction sulfate + ATP + H(+) = adenosine 5'-phosphosulfate + diphosphate. The protein operates within sulfur metabolism; hydrogen sulfide biosynthesis; sulfite from sulfate: step 1/3. The polypeptide is Sulfate adenylyltransferase (Desulforudis audaxviator (strain MP104C)).